A 486-amino-acid chain; its full sequence is ATP synthase subunit beta, chloroplastic (486 aa).

ATP is bound at residue 154–161 (GGAGVGKT).

This sequence belongs to the ATPase alpha/beta chains family. As to quaternary structure, F-type ATPases have 2 components, CF(1) - the catalytic core - and CF(0) - the membrane proton channel. CF(1) has five subunits: alpha(3), beta(3), gamma(1), delta(1), epsilon(1). CF(0) has four main subunits: a(1), b(1), b'(1) and c(9-12).

It localises to the plastid. The protein resides in the chloroplast thylakoid membrane. It catalyses the reaction ATP + H2O + 4 H(+)(in) = ADP + phosphate + 5 H(+)(out). In terms of biological role, produces ATP from ADP in the presence of a proton gradient across the membrane. The catalytic sites are hosted primarily by the beta subunits. This chain is ATP synthase subunit beta, chloroplastic, found in Dennstaedtia punctilobula (Hay-scented fern).